Here is a 393-residue protein sequence, read N- to C-terminus: 4-hydroxyphenylpyruvate dioxygenase (393 aa).

N-acetylthreonine is present on threonine 2. VOC domains are found at residues 18–149 (HFHS…LVEK) and 180–338 (IIDH…IFTK). The residue at position 132 (lysine 132) is an N6-succinyllysine. A Fe cation-binding site is contributed by histidine 183. Phosphoserine occurs at positions 211, 226, and 250. Fe cation contacts are provided by histidine 266 and glutamate 349.

The protein belongs to the 4HPPD family. Homodimer. Fe cation is required as a cofactor.

The protein localises to the cytoplasm. It localises to the endoplasmic reticulum membrane. It is found in the golgi apparatus membrane. It catalyses the reaction 3-(4-hydroxyphenyl)pyruvate + O2 = homogentisate + CO2. It functions in the pathway amino-acid degradation; L-phenylalanine degradation; acetoacetate and fumarate from L-phenylalanine: step 3/6. Functionally, catalyzes the conversion of 4-hydroxyphenylpyruvic acid to homogentisic acid, one of the steps in tyrosine catabolism. The chain is 4-hydroxyphenylpyruvate dioxygenase (HPD) from Bos taurus (Bovine).